The chain runs to 351 residues: MRKIIHIDMDCFYAAIEMRDDPSLRHIPIAVGGNADRRGVISTANYPARRFGVRSAMSTAMALKLCPQLKVLPGRMALYREVSRHIHQILSRYTEWIEPLSLDEAYLNVTDSHHCYGSATLIAQEIRQSIFDELQLTASAGIAPVKFLAKIASDINKPNGQYVIPPDRVADFIKVLPLRKIPGVGKVMVQRLANMGLETCSDVQKYDVIVLVKQLGKFGQVLWDRCHGIDERLVNPDRLRKSIGVERTLARDIHQWEQCTELIESLYLELEKRLSNVKPDLRIARQGIKLKFDDFQLTTQEHVHPLLDKQDLLQLAQKTWTSRREGRGVRLVGLHVTLQDPEIERQLLLEW.

One can recognise a UmuC domain in the interval 4 to 185 (IIHIDMDCFY…LPLRKIPGVG (182 aa)). Residues Asp8 and Asp103 each contribute to the Mg(2+) site. Residue Glu104 is part of the active site.

The protein belongs to the DNA polymerase type-Y family. As to quaternary structure, monomer. It depends on Mg(2+) as a cofactor.

It is found in the cytoplasm. The enzyme catalyses DNA(n) + a 2'-deoxyribonucleoside 5'-triphosphate = DNA(n+1) + diphosphate. Poorly processive, error-prone DNA polymerase involved in untargeted mutagenesis. Copies undamaged DNA at stalled replication forks, which arise in vivo from mismatched or misaligned primer ends. These misaligned primers can be extended by PolIV. Exhibits no 3'-5' exonuclease (proofreading) activity. May be involved in translesional synthesis, in conjunction with the beta clamp from PolIII. This chain is DNA polymerase IV, found in Photorhabdus laumondii subsp. laumondii (strain DSM 15139 / CIP 105565 / TT01) (Photorhabdus luminescens subsp. laumondii).